Consider the following 84-residue polypeptide: Gomesin (84 aa).

An N-terminal signal peptide occupies residues 1 to 23; sequence MNRTRLFACLLLAVLILVHESNA. Gln-24 is subject to Pyrrolidone carboxylic acid. Intrachain disulfides connect Cys-25–Cys-38 and Cys-29–Cys-34. Arg-41 carries the post-translational modification Arginine amide. Residues 42-84 constitute a propeptide that is removed on maturation; that stretch reads GKRSLDETNVGTSDVEKRAFDDSNVPSLVEERELEDEGSFIFD.

As to expression, in hemocytes only, but not in all hemocytes observed.

The protein resides in the secreted. Active against several Gram-positive bacteria such as Bacillus spp, Staphylococcus spp and E.faecalis, several Gram-negative bacteria such as E.coli, K.pneumoniae, P.aeruginosa and Salmonella spp, filamentous fungi such as N.crassa, T.viridae and yeasts such as C.albicans. It is active against the parasite L.amazonensis as well. It shows hemolytic activity. This chain is Gomesin, found in Acanthoscurria gomesiana (Tarantula spider).